A 350-amino-acid polypeptide reads, in one-letter code: ALA-interacting subunit 5 (350 aa).

The disordered stretch occupies residues 1–23 (MSSTAASSTVGGGGSSEISGVKK). Ser-2 bears the N-acetylserine mark. A helical transmembrane segment spans residues 50-70 (VILTFLVAGVVFIPLGVICLF). N-linked (GlcNAc...) asparagine glycosylation is found at Asn-181 and Asn-231. Residues 304–324 (FLGIAYLTVGSICLFLAVTFA) form a helical membrane-spanning segment.

This sequence belongs to the CDC50/LEM3 family. As to quaternary structure, interacts with ALA2 and ALA3 in a heterologous system. Expressed in roots, leaves, stems, flowers and siliques.

Its subcellular location is the golgi apparatus membrane. It is found in the prevacuolar compartment membrane. The protein localises to the endoplasmic reticulum membrane. Required for the lipid transport activity of the ALA/ALIS P4-ATPase complex. This Arabidopsis thaliana (Mouse-ear cress) protein is ALA-interacting subunit 5 (ALIS5).